We begin with the raw amino-acid sequence, 362 residues long: RING finger protein 32 (362 aa).

An RING-type 1; atypical zinc finger spans residues 127–169; the sequence is CPICKEEFELRPQVLLSCSHVFHKACLQAFEKFTNKKTCPLCR. Positions 186 to 215 constitute an IQ domain; the sequence is RIKCVTRIQAYWRGCVVRKWYRNLRKTVPP. The RING-type 2; atypical zinc-finger motif lies at 293–352; the sequence is CSICLAPLSAAGGQRVGAGRRSREMALLSCSHVFHHACLLALEEFSVGDRPPFHACPLCR.

As to expression, highly expressed in testis, less abundant in ovary.

It is found in the cytoplasm. In terms of biological role, may play a role in sperm formation. This Homo sapiens (Human) protein is RING finger protein 32 (RNF32).